The chain runs to 678 residues: Methionine--tRNA ligase (678 aa).

The short motif at 14-24 (PYANGSIHLGH) is the 'HIGH' region element. The Zn(2+) site is built by C145, C148, C158, and C161. A 'KMSKS' region motif is present at residues 331-335 (KMSKS). K334 contributes to the ATP binding site. Positions 576 to 678 (AFAAVDLRIA…SGAKPGQRVK (103 aa)) constitute a tRNA-binding domain.

It belongs to the class-I aminoacyl-tRNA synthetase family. MetG type 1 subfamily. Homodimer. Zn(2+) is required as a cofactor.

It is found in the cytoplasm. The enzyme catalyses tRNA(Met) + L-methionine + ATP = L-methionyl-tRNA(Met) + AMP + diphosphate. Its function is as follows. Is required not only for elongation of protein synthesis but also for the initiation of all mRNA translation through initiator tRNA(fMet) aminoacylation. This is Methionine--tRNA ligase from Pseudomonas aeruginosa (strain UCBPP-PA14).